Consider the following 126-residue polypeptide: Adenosine 5'-monophosphoramidase HINT1 (126 aa).

An N-acetylalanine modification is found at alanine 2. Positions 18-126 (IFGKIIRKEI…GGRQMNWPPG (109 aa)) constitute an HIT domain. N6-acetyllysine is present on residues lysine 21 and lysine 30. 43–44 (DI) contributes to the AMP binding site. A phosphoserine mark is found at serine 45 and serine 72. Residues asparagine 99, 105–107 (GQS), and 112–114 (HLH) each bind AMP. A Histidine triad motif motif is present at residues 110–114 (HIHLH). Residue histidine 112 is the Tele-AMP-histidine intermediate of the active site.

It belongs to the HINT family. Homodimer. Interacts with CDK7. Interacts with RUVBL1 and RUVBL2 and is associated with the LEF1/TCF1-CTNNB1 complex and with a KAT5 histone acetyltransferase complex. Identified in a complex with MITF and CTNNB1. Interacts with CDC34 and RBX1, and is part of a SCF (SKP2-CUL1-F-box protein) E3 ubiquitin-protein ligase complex. Interacts with SUMO1, SUMO2 and RGS17. Interacts with the Ten-1 ICD form of TENM1. Interacts with CALM1; interaction increases in the presence of calcium ions.

The protein localises to the cytoplasm. It localises to the nucleus. It catalyses the reaction adenosine 5'-phosphoramidate + H2O = AMP + NH4(+). Its function is as follows. Exhibits adenosine 5'-monophosphoramidase activity, hydrolyzing purine nucleotide phosphoramidates with a single phosphate group such as adenosine 5'monophosphoramidate (AMP-NH2) to yield AMP and NH2. Hydrolyzes adenosine 5'monophosphomorpholidate (AMP-morpholidate) and guanosine 5'monophosphomorpholidate (GMP-morpholidate). Hydrolyzes lysyl-AMP (AMP-N-epsilon-(N-alpha-acetyl lysine methyl ester)) generated by lysine tRNA ligase, as well as Met-AMP, His-AMP and Asp-AMP, lysyl-GMP (GMP-N-epsilon-(N-alpha-acetyl lysine methyl ester)) and AMP-N-alanine methyl ester. Can also convert adenosine 5'-O-phosphorothioate and guanosine 5'-O-phosphorothioate to the corresponding nucleoside 5'-O-phosphates with concomitant release of hydrogen sulfide. In addition, functions as a scaffolding protein that modulates transcriptional activation by the LEF1/TCF1-CTNNB1 complex and by the complex formed with MITF and CTNNB1. Modulates p53/TP53 levels and p53/TP53-mediated apoptosis. Modulates proteasomal degradation of target proteins by the SCF (SKP2-CUL1-F-box protein) E3 ubiquitin-protein ligase complex. Also exhibits SUMO-specific isopeptidase activity, deconjugating SUMO1 from RANGAP1 and RGS17. This chain is Adenosine 5'-monophosphoramidase HINT1 (Hint1), found in Rattus norvegicus (Rat).